The primary structure comprises 217 residues: Uracil-DNA glycosylase (217 aa).

Aspartate 62 acts as the Proton acceptor in catalysis.

Belongs to the uracil-DNA glycosylase (UDG) superfamily. UNG family.

It localises to the cytoplasm. It carries out the reaction Hydrolyzes single-stranded DNA or mismatched double-stranded DNA and polynucleotides, releasing free uracil.. Its function is as follows. Excises uracil residues from the DNA which can arise as a result of misincorporation of dUMP residues by DNA polymerase or due to deamination of cytosine. The chain is Uracil-DNA glycosylase from Streptococcus gordonii (strain Challis / ATCC 35105 / BCRC 15272 / CH1 / DL1 / V288).